The chain runs to 809 residues: Trimethylamine-N-oxide reductase 2 (809 aa).

Residues 1–31 (MTLTRREFIKHSGIAAGALVVTSAAPLPAWA) constitute a signal peptide (tat-type signal). Residue Ser-176 coordinates Mo-bis(molybdopterin guanine dinucleotide).

The protein belongs to the prokaryotic molybdopterin-containing oxidoreductase family. It depends on Mo-bis(molybdopterin guanine dinucleotide) as a cofactor. In terms of processing, predicted to be exported by the Tat system. The position of the signal peptide cleavage has not been experimentally proven.

It localises to the periplasm. The enzyme catalyses trimethylamine + 2 Fe(III)-[cytochrome c] + H2O = trimethylamine N-oxide + 2 Fe(II)-[cytochrome c] + 3 H(+). In terms of biological role, reduces trimethylamine-N-oxide (TMAO) into trimethylamine; an anaerobic reaction coupled to energy-yielding reactions. Can also reduce other N- and S-oxide compounds such as 4-methylmorpholine-N-oxide and biotin sulfoxide (BSO), but with a lower catalytic efficiency. The sequence is that of Trimethylamine-N-oxide reductase 2 (torZ) from Escherichia coli O157:H7.